The sequence spans 130 residues: Probable 4-amino-4-deoxy-L-arabinose-phosphoundecaprenol flippase subunit ArnF (130 aa).

The Cytoplasmic segment spans residues 1–4 (MGYG). A helical transmembrane segment spans residues 5–25 (WALFSVALVSAAQLLLKWVMM). Over 26 to 44 (HLPPLGALRLWLDPAYAEP) the chain is Periplasmic. The chain crosses the membrane as a helical span at residues 45 to 65 (LALLMGGLLAYVCSMGCWFMA). Residues 66–74 (LRRLPLNKA) are Cytoplasmic-facing. A helical transmembrane segment spans residues 75–95 (YPLLSLSYVLVAACALMIPEF). The Periplasmic segment spans residues 96-103 (NERFTFSR). The helical transmembrane segment at 104 to 124 (LMGVALICGGLLLICLPAGGK) threads the bilayer. Over 125-130 (GDTPRR) the chain is Cytoplasmic.

It belongs to the ArnF family. In terms of assembly, heterodimer of ArnE and ArnF.

Its subcellular location is the cell inner membrane. Its pathway is bacterial outer membrane biogenesis; lipopolysaccharide biosynthesis. In terms of biological role, translocates 4-amino-4-deoxy-L-arabinose-phosphoundecaprenol (alpha-L-Ara4N-phosphoundecaprenol) from the cytoplasmic to the periplasmic side of the inner membrane. The polypeptide is Probable 4-amino-4-deoxy-L-arabinose-phosphoundecaprenol flippase subunit ArnF (Sodalis glossinidius (strain morsitans)).